A 121-amino-acid polypeptide reads, in one-letter code: Prefoldin subunit beta (121 aa).

It belongs to the prefoldin subunit beta family. In terms of assembly, heterohexamer of two alpha and four beta subunits.

The protein resides in the cytoplasm. Molecular chaperone capable of stabilizing a range of proteins. Seems to fulfill an ATP-independent, HSP70-like function in archaeal de novo protein folding. This is Prefoldin subunit beta from Methanoculleus marisnigri (strain ATCC 35101 / DSM 1498 / JR1).